Reading from the N-terminus, the 495-residue chain is MVSEITHQSYPLHFVLFPYMAQGHMIPMVDIARLLAQRGVKITIVTTPQNAARFENVLSRAIESGLPISIVQVKLPSQEAGLPEGIETFESLVSMELLVPFFKAVNMLEEPVQKLFEEMSPQPSCIISDFCLHYTSKIAKKFNIPKILFHGMCCFCLLCMHVLRKNCEILENLKSDKEHFVVPYFPDRVEFTRPQVPMATYAPGDWQEIREDIVEADKTSYGVIVNTYQELEPAYANDYKEARSGKAWTIGPVSLCNKVGADKAERGNKADIDQDECLKWLDSKEEGSVLYVCLGSNCSVPLSQLKELGLGLEESQRPFIWVVRGWEKNKELLEWFSESGFEERVKDRGLLIKGWSPQMLILAHHSVGGFLTHCGWNSTLEGITSGIPLLTWPLIVDQFCNQKLVVQVLKVGVSAGVEEVTNWGEEEKIGVLVDKEGVKKAVEELMGESDDAKERRKRVKALGQLAHKAVEEGGSSHSNITSLLEDIMQLAQSNN.

23-26 is a UDP-alpha-D-glucose binding site; sequence GHMI. The active-site Proton acceptor is H24. Residue D129 is the Charge relay of the active site. Residues 355–358, 373–381, and 397–398 each bind UDP-alpha-D-glucose; these read WSPQ, HCGWNSTLE, and DQ.

The protein belongs to the UDP-glycosyltransferase family.

Possesses very weak glucosyltransferase activity toward 2,4,5-trichlorophenol (TCP), when assayed with high concentrations of TCP. The protein is UDP-glycosyltransferase 73C9 of Barbarea vulgaris (Yellow rocket).